The following is a 295-amino-acid chain: Small ribosomal subunit protein uS2 (295 aa).

The interval 242–295 (APVEPTLARELAPEAPAPEAPAEEAPAAEAAPAAEAAPAAEAAPAEASSEEQAG) is disordered. Residues 264–288 (EEAPAAEAAPAAEAAPAAEAAPAEA) are compositionally biased toward low complexity.

Belongs to the universal ribosomal protein uS2 family.

This is Small ribosomal subunit protein uS2 from Phenylobacterium zucineum (strain HLK1).